The sequence spans 318 residues: NADH-ubiquinone oxidoreductase chain 1 (318 aa).

The next 8 helical transmembrane spans lie at 3–23 (LINV…LTLL), 69–89 (LMFT…WIPI), 100–120 (LGVL…LWSG), 135–155 (AVAQ…SIMM), 171–191 (HMWL…STLA), 223–243 (FFLA…ILFF), 253–273 (ELHT…FLWV), and 293–313 (FLPL…TFAG).

This sequence belongs to the complex I subunit 1 family.

It is found in the mitochondrion inner membrane. The catalysed reaction is a ubiquinone + NADH + 5 H(+)(in) = a ubiquinol + NAD(+) + 4 H(+)(out). Its function is as follows. Core subunit of the mitochondrial membrane respiratory chain NADH dehydrogenase (Complex I) that is believed to belong to the minimal assembly required for catalysis. Complex I functions in the transfer of electrons from NADH to the respiratory chain. The immediate electron acceptor for the enzyme is believed to be ubiquinone. The protein is NADH-ubiquinone oxidoreductase chain 1 (MT-ND1) of Dasypus novemcinctus (Nine-banded armadillo).